The following is a 94-amino-acid chain: Co-chaperonin GroES (94 aa).

This sequence belongs to the GroES chaperonin family. In terms of assembly, heptamer of 7 subunits arranged in a ring. Interacts with the chaperonin GroEL.

It localises to the cytoplasm. In terms of biological role, together with the chaperonin GroEL, plays an essential role in assisting protein folding. The GroEL-GroES system forms a nano-cage that allows encapsulation of the non-native substrate proteins and provides a physical environment optimized to promote and accelerate protein folding. GroES binds to the apical surface of the GroEL ring, thereby capping the opening of the GroEL channel. The polypeptide is Co-chaperonin GroES (Ligilactobacillus salivarius (strain UCC118) (Lactobacillus salivarius)).